Reading from the N-terminus, the 82-residue chain is Large ribosomal subunit protein uL23 (82 aa).

It belongs to the universal ribosomal protein uL23 family. As to quaternary structure, part of the 50S ribosomal subunit. Contacts protein L29.

Binds to 23S rRNA. One of the proteins that surrounds the polypeptide exit tunnel on the outside of the ribosome. This Natronomonas pharaonis (strain ATCC 35678 / DSM 2160 / CIP 103997 / JCM 8858 / NBRC 14720 / NCIMB 2260 / Gabara) (Halobacterium pharaonis) protein is Large ribosomal subunit protein uL23.